A 104-amino-acid polypeptide reads, in one-letter code: uncharacterized protein (104 aa).

An N-terminal signal peptide occupies residues 1-23; the sequence is MDIHDYVELIALAFWVISVVSVG.

This is an uncharacterized protein from Lactobacillus helveticus (Lactobacillus suntoryeus).